Reading from the N-terminus, the 192-residue chain is Holliday junction branch migration complex subunit RuvA (192 aa).

The tract at residues 1–64 (MLGRLTGLLA…EDAQVLFGFL (64 aa)) is domain I. Residues 65–139 (TAPERETFRM…GKLGADLGPA (75 aa)) form a domain II region. A flexible linker region spans residues 139–143 (AIGGK). The segment at 144–192 (PASDAQADILQALIALGYSEREAQAAVKALPAEVGVSDGIKLALKALAR) is domain III.

The protein belongs to the RuvA family. As to quaternary structure, homotetramer. Forms an RuvA(8)-RuvB(12)-Holliday junction (HJ) complex. HJ DNA is sandwiched between 2 RuvA tetramers; dsDNA enters through RuvA and exits via RuvB. An RuvB hexamer assembles on each DNA strand where it exits the tetramer. Each RuvB hexamer is contacted by two RuvA subunits (via domain III) on 2 adjacent RuvB subunits; this complex drives branch migration. In the full resolvosome a probable DNA-RuvA(4)-RuvB(12)-RuvC(2) complex forms which resolves the HJ.

The protein localises to the cytoplasm. The RuvA-RuvB-RuvC complex processes Holliday junction (HJ) DNA during genetic recombination and DNA repair, while the RuvA-RuvB complex plays an important role in the rescue of blocked DNA replication forks via replication fork reversal (RFR). RuvA specifically binds to HJ cruciform DNA, conferring on it an open structure. The RuvB hexamer acts as an ATP-dependent pump, pulling dsDNA into and through the RuvAB complex. HJ branch migration allows RuvC to scan DNA until it finds its consensus sequence, where it cleaves and resolves the cruciform DNA. This chain is Holliday junction branch migration complex subunit RuvA, found in Methylibium petroleiphilum (strain ATCC BAA-1232 / LMG 22953 / PM1).